Here is a 312-residue protein sequence, read N- to C-terminus: Light-independent protochlorophyllide reductase iron-sulfur ATP-binding protein (312 aa).

ATP-binding positions include 55-60 (GIGKST) and K84. Position 59 (S59) interacts with Mg(2+). [4Fe-4S] cluster-binding residues include C140 and C174. ATP is bound by residues 225-226 (NR) and 249-251 (PDL).

It belongs to the NifH/BchL/ChlL family. As to quaternary structure, homodimer. Protochlorophyllide reductase is composed of three subunits; BchL, BchN and BchB. It depends on [4Fe-4S] cluster as a cofactor.

The catalysed reaction is chlorophyllide a + oxidized 2[4Fe-4S]-[ferredoxin] + 2 ADP + 2 phosphate = protochlorophyllide a + reduced 2[4Fe-4S]-[ferredoxin] + 2 ATP + 2 H2O. The protein operates within porphyrin-containing compound metabolism; bacteriochlorophyll biosynthesis (light-independent). Its function is as follows. Component of the dark-operative protochlorophyllide reductase (DPOR) that uses Mg-ATP and reduced ferredoxin to reduce ring D of protochlorophyllide (Pchlide) to form chlorophyllide a (Chlide). This reaction is light-independent. The L component serves as a unique electron donor to the NB-component of the complex, and binds Mg-ATP. The sequence is that of Light-independent protochlorophyllide reductase iron-sulfur ATP-binding protein from Rhodopseudomonas palustris (strain HaA2).